Consider the following 340-residue polypeptide: 4-hydroxy-3-methylbut-2-enyl diphosphate reductase (340 aa).

Residue Cys-19 participates in [4Fe-4S] cluster binding. (2E)-4-hydroxy-3-methylbut-2-enyl diphosphate-binding residues include His-50 and His-90. Dimethylallyl diphosphate is bound by residues His-50 and His-90. Residues His-50 and His-90 each contribute to the isopentenyl diphosphate site. A [4Fe-4S] cluster-binding site is contributed by Cys-112. Residue His-141 participates in (2E)-4-hydroxy-3-methylbut-2-enyl diphosphate binding. His-141 provides a ligand contact to dimethylallyl diphosphate. His-141 contributes to the isopentenyl diphosphate binding site. The active-site Proton donor is Glu-143. Position 190 (Thr-190) interacts with (2E)-4-hydroxy-3-methylbut-2-enyl diphosphate. Cys-220 serves as a coordination point for [4Fe-4S] cluster. Positions 248, 249, 250, and 292 each coordinate (2E)-4-hydroxy-3-methylbut-2-enyl diphosphate. Residues Ser-248, Ser-249, Asn-250, and Ser-292 each contribute to the dimethylallyl diphosphate site. Residues Ser-248, Ser-249, Asn-250, and Ser-292 each coordinate isopentenyl diphosphate.

This sequence belongs to the IspH family. The cofactor is [4Fe-4S] cluster.

It catalyses the reaction isopentenyl diphosphate + 2 oxidized [2Fe-2S]-[ferredoxin] + H2O = (2E)-4-hydroxy-3-methylbut-2-enyl diphosphate + 2 reduced [2Fe-2S]-[ferredoxin] + 2 H(+). The catalysed reaction is dimethylallyl diphosphate + 2 oxidized [2Fe-2S]-[ferredoxin] + H2O = (2E)-4-hydroxy-3-methylbut-2-enyl diphosphate + 2 reduced [2Fe-2S]-[ferredoxin] + 2 H(+). It participates in isoprenoid biosynthesis; dimethylallyl diphosphate biosynthesis; dimethylallyl diphosphate from (2E)-4-hydroxy-3-methylbutenyl diphosphate: step 1/1. Its pathway is isoprenoid biosynthesis; isopentenyl diphosphate biosynthesis via DXP pathway; isopentenyl diphosphate from 1-deoxy-D-xylulose 5-phosphate: step 6/6. In terms of biological role, catalyzes the conversion of 1-hydroxy-2-methyl-2-(E)-butenyl 4-diphosphate (HMBPP) into a mixture of isopentenyl diphosphate (IPP) and dimethylallyl diphosphate (DMAPP). Acts in the terminal step of the DOXP/MEP pathway for isoprenoid precursor biosynthesis. This chain is 4-hydroxy-3-methylbut-2-enyl diphosphate reductase, found in Thermus thermophilus (strain ATCC BAA-163 / DSM 7039 / HB27).